The primary structure comprises 549 residues: CTP synthase (549 aa).

The segment at 1–266 (MSAKYIFVTG…DKLALRYLHL (266 aa)) is amidoligase domain. Ser14 provides a ligand contact to CTP. Ser14 is a UTP binding site. ATP-binding positions include 15 to 20 (SLGKGL) and Asp72. Mg(2+) contacts are provided by Asp72 and Glu140. CTP-binding positions include 147–149 (DIE), 187–192 (KTKPTQ), and Lys223. Residues 187–192 (KTKPTQ) and Lys223 each bind UTP. Residue 239–241 (KDV) coordinates ATP. One can recognise a Glutamine amidotransferase type-1 domain in the interval 291–533 (SIGIVGKYVE…VKAAYQNHKP (243 aa)). Position 353 (Gly353) interacts with L-glutamine. Cys380 acts as the Nucleophile; for glutamine hydrolysis in catalysis. L-glutamine-binding positions include 381 to 384 (LGMQ), Glu404, and Arg461. Catalysis depends on residues His506 and Glu508.

The protein belongs to the CTP synthase family. In terms of assembly, homotetramer.

The enzyme catalyses UTP + L-glutamine + ATP + H2O = CTP + L-glutamate + ADP + phosphate + 2 H(+). It catalyses the reaction L-glutamine + H2O = L-glutamate + NH4(+). It carries out the reaction UTP + NH4(+) + ATP = CTP + ADP + phosphate + 2 H(+). Its pathway is pyrimidine metabolism; CTP biosynthesis via de novo pathway; CTP from UDP: step 2/2. Its activity is regulated as follows. Allosterically activated by GTP, when glutamine is the substrate; GTP has no effect on the reaction when ammonia is the substrate. The allosteric effector GTP functions by stabilizing the protein conformation that binds the tetrahedral intermediate(s) formed during glutamine hydrolysis. Inhibited by the product CTP, via allosteric rather than competitive inhibition. In terms of biological role, catalyzes the ATP-dependent amination of UTP to CTP with either L-glutamine or ammonia as the source of nitrogen. Regulates intracellular CTP levels through interactions with the four ribonucleotide triphosphates. This chain is CTP synthase, found in Acidobacterium capsulatum (strain ATCC 51196 / DSM 11244 / BCRC 80197 / JCM 7670 / NBRC 15755 / NCIMB 13165 / 161).